We begin with the raw amino-acid sequence, 570 residues long: Sulfite reductase [NADPH] hemoprotein beta-component (570 aa).

The [4Fe-4S] cluster site is built by C434, C440, C479, and C483. C483 lines the siroheme pocket.

This sequence belongs to the nitrite and sulfite reductase 4Fe-4S domain family. Alpha(8)-beta(8). The alpha component is a flavoprotein, the beta component is a hemoprotein. The cofactor is siroheme. [4Fe-4S] cluster is required as a cofactor.

The enzyme catalyses hydrogen sulfide + 3 NADP(+) + 3 H2O = sulfite + 3 NADPH + 4 H(+). It participates in sulfur metabolism; hydrogen sulfide biosynthesis; hydrogen sulfide from sulfite (NADPH route): step 1/1. In terms of biological role, component of the sulfite reductase complex that catalyzes the 6-electron reduction of sulfite to sulfide. This is one of several activities required for the biosynthesis of L-cysteine from sulfate. The polypeptide is Sulfite reductase [NADPH] hemoprotein beta-component (Cronobacter sakazakii (strain ATCC BAA-894) (Enterobacter sakazakii)).